Reading from the N-terminus, the 435-residue chain is Membrane-bound ghrelin O-acyltransferase MBOAT4 (435 aa).

Residues 1–5 (MDWLQ) are Lumenal-facing. A helical membrane pass occupies residues 6-26 (LFFLHPLSFYQGAAFPFALLF). Residues 27-40 (NYLCILDTFSTRAR) lie on the Cytoplasmic side of the membrane. The chain crosses the membrane as a helical span at residues 41–56 (YLFLLAGGGVLAFAAM). Topologically, residues 57 to 59 (GPY) are lumenal. A helical transmembrane segment spans residues 60–76 (SLLIFIPALCAVALVSF). Over 77-82 (LSPQEV) the chain is Cytoplasmic. The chain crosses the membrane as a helical span at residues 83–101 (HRLTFFFQMGWQTLCHLGL). The Lumenal portion of the chain corresponds to 102-120 (HYTEYYLGEPPPVRFYITL). A helical membrane pass occupies residues 121–136 (SSLMLLTQRVTSLSLD). Residues 137–206 (ICEGKVEAPR…YPSISFRALT (70 aa)) are Cytoplasmic-facing. The helical transmembrane segment at 207–227 (WRGLQILGLECLKVALRSAVS) threads the bilayer. Residues 228–240 (AGAGLDDCQRLEC) lie on the Lumenal side of the membrane. The helical transmembrane segment at 241–261 (IYLMWSTAWLFKLTYYSHWIL) threads the bilayer. Topologically, residues 262–324 (DDSLLHAAGF…RRLVFRKSRR (63 aa)) are cytoplasmic. Active-site residues include Asn307 and His338. The helical transmembrane segment at 325 to 338 (WPLLQTFAFSAWWH) threads the bilayer. Over 339–340 (GL) the chain is Lumenal. A helical transmembrane segment spans residues 341 to 357 (HPGQVFGFLCWSVMVKA). Topologically, residues 358 to 376 (DYLIHTFANVCIRSWPLRL) are cytoplasmic. A helical transmembrane segment spans residues 377 to 397 (LYRALTWAHTQLIIAYIMLAV). The Lumenal portion of the chain corresponds to 398–407 (EGRSLSSLCQ). The helical transmembrane segment at 408 to 428 (LCCSYNSLFPVMYGLLLFLLA) threads the bilayer. The Cytoplasmic segment spans residues 429–435 (ERKDKRN).

This sequence belongs to the membrane-bound acyltransferase family. As to quaternary structure, monomer. Post-translationally, not glycosylated. In terms of tissue distribution, highly expressed in stomach and pancreas. Lower expression in small intestine and colon. Very low expression in testis.

It is found in the endoplasmic reticulum membrane. It catalyses the reaction octanoyl-CoA + L-seryl-[protein] = O-octanoyl-L-seryl-[protein] + CoA. The catalysed reaction is hexanoyl-CoA + L-seryl-[protein] = O-hexanoyl-L-seryl-[protein] + CoA. The enzyme catalyses decanoyl-CoA + L-seryl-[protein] = O-decanoyl-L-seryl-[protein] + CoA. It carries out the reaction L-seryl-[protein] + acetyl-CoA = O-acetyl-L-seryl-[protein] + CoA. It catalyses the reaction L-seryl-[protein] + butanoyl-CoA = O-butanoyl-L-seryl-[protein] + CoA. The catalysed reaction is pentanoyl-CoA + L-seryl-[protein] = O-pentanoyl-L-seryl-[protein] + CoA. The enzyme catalyses heptanoyl-CoA + L-seryl-[protein] = O-heptanoyl-L-seryl-[protein] + CoA. It carries out the reaction nonanoyl-CoA + L-seryl-[protein] = O-nonanoyl-L-seryl-[protein] + CoA. It catalyses the reaction L-seryl-[protein] + dodecanoyl-CoA = O-dodecanoyl-L-seryl-[protein] + CoA. The catalysed reaction is L-seryl-[protein] + tetradecanoyl-CoA = O-tetradecanoyl-L-seryl-[protein] + CoA. The enzyme catalyses a fatty acyl-CoA + L-seryl-[protein] = O-fatty acyl-L-seryl-[protein] + CoA. Its activity is regulated as follows. Inhibited by 1-[2-cyano-3,12-dioxooleana-1,9(11)- dien-28-oyl]ethylamide (CDDO-EA) with an IC(50) of 60 uM. Inhibited by Fe3+ and Cu2+ and the O-acyltransferase activity is completely blocked over 5 mM Fe3+ and 0.5 mM Cu2+. Its function is as follows. Catalyzes ghrelin acylation at 'Ser-3' using preferentially octanoyl-CoA, hexanoyl-CoA and decanoyl-CoA as acyl-CoA donors leading to ghrelin activity. In vitro also uses acyl-CoA donors of different lengths from short-chain (C2) to long-chain fatty acids (C16) knowing that acyl-CoA donors from butanoyl-CoA (C4) to dodecanoyl-CoA (C12) are more efficient compared to longer acyl-CoA donors, such as myristoyl-CoA (C14) and palmitoyl-CoA (C16) that are not efficient. Functionally, inactive octanoyltransferase activity. The protein is Membrane-bound ghrelin O-acyltransferase MBOAT4 of Mus musculus (Mouse).